We begin with the raw amino-acid sequence, 367 residues long: Cobalt-precorrin-5B C(1)-methyltransferase (367 aa).

Belongs to the CbiD family.

The enzyme catalyses Co-precorrin-5B + S-adenosyl-L-methionine = Co-precorrin-6A + S-adenosyl-L-homocysteine. It functions in the pathway cofactor biosynthesis; adenosylcobalamin biosynthesis; cob(II)yrinate a,c-diamide from sirohydrochlorin (anaerobic route): step 6/10. Its function is as follows. Catalyzes the methylation of C-1 in cobalt-precorrin-5B to form cobalt-precorrin-6A. The polypeptide is Cobalt-precorrin-5B C(1)-methyltransferase (Leptospira interrogans serogroup Icterohaemorrhagiae serovar Lai (strain 56601)).